The primary structure comprises 217 residues: Ras-related protein Rab-39A (217 aa).

GTP-binding residues include serine 17, glycine 20, lysine 21, serine 22, cysteine 23, and threonine 44. Position 22 (serine 22) interacts with Mg(2+). Positions 39–47 (PACDPTVGV) are switch-I. Residues threonine 44 and aspartate 68 each coordinate Mg(2+). 6 residues coordinate GTP: glycine 71, histidine 127, lysine 128, aspartate 130, alanine 158, and lysine 159. The segment at 71 to 87 (GQERFRSITRSYYRNSV) is switch-II. Residues cysteine 215 and cysteine 217 are each lipidated (S-geranylgeranyl cysteine). Residue cysteine 217 is modified to Cysteine methyl ester.

This sequence belongs to the small GTPase superfamily. Rab family. Interacts (GDP-bound) with C9orf72; C9orf72 acts as a GEF for RAB39A. Interacts (GTP-bound) with HOPS complex components VPS39 and VPS41, and STX17; interaction between HOPS components and RAB39A contributes to obtaining a functional HOPS complex that promotes membrane fusion driven by STX17-SNAP29-VAMP8. Interacts with BECN1. Probably associates with the PI3K (PI3KC3/PI3K-III/class III phosphatidylinositol 3-kinase) complex. Interacts with UACA. Interacts with isoform a of RASSF1. Does not interact with isoform c of RASSF1. Mg(2+) serves as cofactor. Post-translationally, prenylated. Prenylation is required for association with cellular membranes.

It is found in the cell membrane. It localises to the cytoplasmic vesicle. Its subcellular location is the phagosome membrane. The protein localises to the late endosome membrane. The protein resides in the lysosome membrane. It is found in the autolysosome membrane. It carries out the reaction GTP + H2O = GDP + phosphate + H(+). Its activity is regulated as follows. Regulated by guanine nucleotide exchange factors (GEFs) including c9Orf72, which promote the exchange of bound GDP for free GTP. Regulated by GTPase activating proteins (GAPs) which increase the GTP hydrolysis activity. Inhibited by GDP dissociation inhibitors (GDIs). Functionally, the small GTPases Rab are key regulators of intracellular membrane trafficking, from the formation of transport vesicles to their fusion with membranes. Rabs cycle between an inactive GDP-bound form and an active GTP-bound form that is able to recruit to membranes different sets of downstream effectors directly responsible for vesicle formation, movement, tethering and fusion. RAB39A regulates autophagosome-lysosome fusion via recruitment of the HOPS endosomal tethering complex onto lysosomes; this process involves lysosomal RAB39A and autophagosomal RAB2A recruitment of HOPS subcomplexes VPS41-VPS16-VPS18-VPS33A and VPS39-VPS11, respectively, which assemble into a functional complex to mediate membrane tethering and SNAREs-driven membrane fusion. Also negatively regulates lipopolysaccharide (LPS)-induced autophagosome formation in macrophages, possibly by implicating PI3K. Promotes the delivery of MHC-I molecules from the ER to phagosomes and the generation of peptide-loaded MHC-I complexes in phagosomes, thus enhancing antigen cross-presentation by dendritic cells. Plays a role in the maturation and acidification of phagosomes that engulf pathogens, such as S.aureus and M.tuberculosis. Plays a role in the fusion of phagosomes with lysosomes. May be involved in multiple neurite formation. The protein is Ras-related protein Rab-39A of Mus musculus (Mouse).